The sequence spans 124 residues: Transcription initiation factor TFIID subunit 13 (124 aa).

The segment covering 1-16 (MADEEEDPTFEEENEE) has biased composition (acidic residues). The interval 1 to 28 (MADEEEDPTFEEENEEIGGGAEGGQGKR) is disordered. The 43-residue stretch at 32 to 74 (FSKELRCMMYGFGDDQNPYTESVDILEDLVIEFITEMTHKAMS) folds into the Histone-fold domain.

This sequence belongs to the TAF13 family. As to quaternary structure, component of the TFIID basal transcription factor complex, composed of TATA-box-binding protein TBP, and a number of TBP-associated factors (TAFs), including TAF1, TAF2, TAF3, TAF4, TAF5, TAF6, TAF7, TAF8, TAF9, TAF10, TAF11, TAF12 and TAF13. Interacts with TBP, and more strongly with TAF10 and TAF11.

It localises to the nucleus. In terms of biological role, the TFIID basal transcription factor complex plays a major role in the initiation of RNA polymerase II (Pol II)-dependent transcription. TFIID recognizes and binds promoters via its subunit TBP, a TATA-box-binding protein, and promotes assembly of the pre-initiation complex (PIC). The TFIID complex consists of TBP and TBP-associated factors (TAFs), including TAF1, TAF2, TAF3, TAF4, TAF5, TAF6, TAF7, TAF8, TAF9, TAF10, TAF11, TAF12 and TAF13. TAF13, together with TAF11 and TBP, play key roles during promoter binding by the TFIID and TFIIA transcription factor complexes. This chain is Transcription initiation factor TFIID subunit 13, found in Bos taurus (Bovine).